We begin with the raw amino-acid sequence, 373 residues long: Molybdenum import ATP-binding protein ModC (373 aa).

Residues 4–240 (LTPPTIRAAF…PKLPLAIARD (237 aa)) form the ABC transporter domain. 38–45 (GPSGCGKS) is an ATP binding site. Residues 299-369 (ASSILNAIAA…IKGVALAPGR (71 aa)) form the Mop domain.

The protein belongs to the ABC transporter superfamily. Molybdate importer (TC 3.A.1.8) family. The complex is composed of two ATP-binding proteins (ModC), two transmembrane proteins (ModB) and a solute-binding protein (ModA).

The protein localises to the cell inner membrane. It catalyses the reaction molybdate(out) + ATP + H2O = molybdate(in) + ADP + phosphate + H(+). Part of the ABC transporter complex ModABC involved in molybdenum import. Responsible for energy coupling to the transport system. In Rhodopseudomonas palustris (strain ATCC BAA-98 / CGA009), this protein is Molybdenum import ATP-binding protein ModC.